The primary structure comprises 42 residues: Delta-hexatoxin-Ar1a (42 aa).

Intrachain disulfides connect Cys1–Cys15, Cys8–Cys20, Cys14–Cys31, and Cys16–Cys42.

Belongs to the neurotoxin 06 (delta-actx) family. Expressed by the venom gland.

It localises to the secreted. In terms of biological role, inhibits tetrodotoxin-sensitive voltage-gated sodium channels (Nav) by binding to site 3. It slows the inactivation, causes a prolongation of action potential duration resulting in repetitive firing in autonomic and motor nerve fibers. Does not depolarize the resting potential. Does not affect tetrodotoxin-resistant sodium channels. This lethal neurotoxin is active on both insect and mammalian voltage-gated sodium channels. The protein is Delta-hexatoxin-Ar1a of Atrax robustus (Sydney funnel-web spider).